A 202-amino-acid chain; its full sequence is NADH-ubiquinone oxidoreductase chain 6 (202 aa).

The next 5 membrane-spanning stretches (helical) occupy residues 1–21 (MVTMYFFTLSFGTVASGIMVI), 29–49 (SVFWLVVAFISSAALFILLGV), 52–72 (IALMFIIIYVGAIAILFLFVI), 96–116 (VPIGLAVGTLFFEAIASSWLI), and 156–176 (YYLFILVSFILLVAMLGAIVL).

Belongs to the complex I subunit 6 family.

It is found in the mitochondrion membrane. The enzyme catalyses a ubiquinone + NADH + 5 H(+)(in) = a ubiquinol + NAD(+) + 4 H(+)(out). In terms of biological role, core subunit of the mitochondrial membrane respiratory chain NADH dehydrogenase (Complex I) that is believed to belong to the minimal assembly required for catalysis. Complex I functions in the transfer of electrons from NADH to the respiratory chain. The immediate electron acceptor for the enzyme is believed to be ubiquinone. In Metridium senile (Brown sea anemone), this protein is NADH-ubiquinone oxidoreductase chain 6 (ND6).